The following is a 364-amino-acid chain: Probable dual-specificity RNA methyltransferase RlmN (364 aa).

Residue Glu-107 is the Proton acceptor of the active site. The Radical SAM core domain maps to 113–346 (HDYGNSVCVT…ATIRREQGSD (234 aa)). Cysteines 120 and 351 form a disulfide. Positions 127, 131, and 134 each coordinate [4Fe-4S] cluster. S-adenosyl-L-methionine is bound by residues 177 to 178 (GE), Ser-209, 232 to 234 (SLH), and Asn-308. Cys-351 functions as the S-methylcysteine intermediate in the catalytic mechanism.

It belongs to the radical SAM superfamily. RlmN family. [4Fe-4S] cluster serves as cofactor.

The protein resides in the cytoplasm. The catalysed reaction is adenosine(2503) in 23S rRNA + 2 reduced [2Fe-2S]-[ferredoxin] + 2 S-adenosyl-L-methionine = 2-methyladenosine(2503) in 23S rRNA + 5'-deoxyadenosine + L-methionine + 2 oxidized [2Fe-2S]-[ferredoxin] + S-adenosyl-L-homocysteine. It catalyses the reaction adenosine(37) in tRNA + 2 reduced [2Fe-2S]-[ferredoxin] + 2 S-adenosyl-L-methionine = 2-methyladenosine(37) in tRNA + 5'-deoxyadenosine + L-methionine + 2 oxidized [2Fe-2S]-[ferredoxin] + S-adenosyl-L-homocysteine. Specifically methylates position 2 of adenine 2503 in 23S rRNA and position 2 of adenine 37 in tRNAs. Confers resistance to some classes of antibiotics. The protein is Probable dual-specificity RNA methyltransferase RlmN of Staphylococcus aureus (strain MW2).